A 385-amino-acid polypeptide reads, in one-letter code: Rubredoxin-NAD(+) reductase (385 aa).

Residues 8 to 11 (AGTA), 32 to 33 (SR), isoleucine 79, glutamate 156, aspartate 275, and isoleucine 293 contribute to the FAD site.

This sequence belongs to the FAD-dependent oxidoreductase family. Homodimer. FAD is required as a cofactor.

It localises to the cytoplasm. The enzyme catalyses 2 reduced [rubredoxin] + NAD(+) + H(+) = 2 oxidized [rubredoxin] + NADH. The protein operates within hydrocarbon metabolism; alkane degradation. Involved in the hydrocarbon hydroxylating system, which transfers electrons from NADH to rubredoxin reductase and then through rubredoxin to alkane 1 monooxygenase. The protein is Rubredoxin-NAD(+) reductase (alkT) of Ectopseudomonas oleovorans (Pseudomonas oleovorans).